We begin with the raw amino-acid sequence, 224 residues long: MGRRPARCYRQIKNKPYPKSRYCRGVPDPKIRIYDVGMKKKGVDEFPYCVHLVSWEKENVSSEALEAARIACNKYMTKNAGKDAFHLRVRVHPFHVLRINKMLSCAGADRLQTGMRGAFGKPQGTCARVDIGQVLLSVRCKESNAKHAEEALRRAKFKFPGRQKIIHSRKWGFTKFTREEYVKLKAEGRIMSDGVNAQLLGSHGRLAKRAPGKAFLAETIQASA.

This sequence belongs to the universal ribosomal protein uL16 family. Component of the small ribosomal subunit. Mature ribosomes consist of a small (40S) and a large (60S) subunit. The 40S subunit contains about 33 different proteins and 1 molecule of RNA (18S). The 60S subunit contains about 49 different proteins and 3 molecules of RNA (25S, 5.8S and 5S).

This Oryza sativa subsp. indica (Rice) protein is Large ribosomal subunit protein uL16z (SC34).